The following is a 368-amino-acid chain: Alanine racemase (368 aa).

The active-site Proton acceptor; specific for D-alanine is the Lys40. At Lys40 the chain carries N6-(pyridoxal phosphate)lysine. Arg136 contributes to the substrate binding site. Tyr263 functions as the Proton acceptor; specific for L-alanine in the catalytic mechanism. Residue Met310 participates in substrate binding.

This sequence belongs to the alanine racemase family. The cofactor is pyridoxal 5'-phosphate.

It catalyses the reaction L-alanine = D-alanine. It participates in amino-acid biosynthesis; D-alanine biosynthesis; D-alanine from L-alanine: step 1/1. Its function is as follows. Catalyzes the interconversion of L-alanine and D-alanine. May also act on other amino acids. This chain is Alanine racemase (alr), found in Streptococcus uberis (strain ATCC BAA-854 / 0140J).